The following is a 283-amino-acid chain: Protein/nucleic acid deglycase HchA (283 aa).

Zn(2+) contacts are provided by His86, Glu91, and His123. Cys185 serves as the catalytic Nucleophile.

It belongs to the peptidase C56 family. HchA subfamily. Homodimer.

It is found in the cytoplasm. The enzyme catalyses N(omega)-(1-hydroxy-2-oxopropyl)-L-arginyl-[protein] + H2O = lactate + L-arginyl-[protein] + H(+). The catalysed reaction is N(6)-(1-hydroxy-2-oxopropyl)-L-lysyl-[protein] + H2O = lactate + L-lysyl-[protein] + H(+). It catalyses the reaction S-(1-hydroxy-2-oxopropyl)-L-cysteinyl-[protein] + H2O = lactate + L-cysteinyl-[protein] + H(+). It carries out the reaction N(omega)-(1-hydroxy-2-oxoethyl)-L-arginyl-[protein] + H2O = L-arginyl-[protein] + glycolate + H(+). The enzyme catalyses N(6)-(1-hydroxy-2-oxoethyl)-L-lysyl-[protein] + H2O = glycolate + L-lysyl-[protein] + H(+). The catalysed reaction is S-(1-hydroxy-2-oxoethyl)-L-cysteinyl-[protein] + H2O = glycolate + L-cysteinyl-[protein] + H(+). It catalyses the reaction N(2)-(1-hydroxy-2-oxopropyl)-dGTP + H2O = lactate + dGTP + H(+). It carries out the reaction N(2)-(1-hydroxy-2-oxopropyl)-GTP + H2O = lactate + GTP + H(+). The enzyme catalyses N(2)-(1-hydroxy-2-oxopropyl)-GDP + H2O = lactate + GDP + H(+). The catalysed reaction is N(2)-(1-hydroxy-2-oxopropyl)-GMP + H2O = lactate + GMP + H(+). It catalyses the reaction N(2)-(1-hydroxy-2-oxoethyl)-dGTP + H2O = dGTP + glycolate + H(+). It carries out the reaction N(2)-(1-hydroxy-2-oxoethyl)-GTP + H2O = glycolate + GTP + H(+). The enzyme catalyses N(2)-(1-hydroxy-2-oxoethyl)-GDP + H2O = glycolate + GDP + H(+). The catalysed reaction is N(2)-(1-hydroxy-2-oxoethyl)-GMP + H2O = glycolate + GMP + H(+). It catalyses the reaction an N(2)-(1-hydroxy-2-oxopropyl)-guanosine in RNA + H2O = a guanosine in RNA + lactate + H(+). It carries out the reaction an N(2)-(1-hydroxy-2-oxopropyl)-2'-deoxyguanosine in DNA + H2O = a 2'-deoxyguanosine in DNA + lactate + H(+). The enzyme catalyses an N(2)-(1-hydroxy-2-oxoethyl)-guanosine in RNA + H2O = a guanosine in RNA + glycolate + H(+). The catalysed reaction is an N(2)-(1-hydroxy-2-oxoethyl)-2'-deoxyguanosine in DNA + H2O = a 2'-deoxyguanosine in DNA + glycolate + H(+). Functionally, protein and nucleotide deglycase that catalyzes the deglycation of the Maillard adducts formed between amino groups of proteins or nucleotides and reactive carbonyl groups of glyoxals. Thus, functions as a protein deglycase that repairs methylglyoxal- and glyoxal-glycated proteins, and releases repaired proteins and lactate or glycolate, respectively. Deglycates cysteine, arginine and lysine residues in proteins, and thus reactivates these proteins by reversing glycation by glyoxals. Acts on early glycation intermediates (hemithioacetals and aminocarbinols), preventing the formation of Schiff bases and advanced glycation endproducts (AGE). Also functions as a nucleotide deglycase able to repair glycated guanine in the free nucleotide pool (GTP, GDP, GMP, dGTP) and in DNA and RNA. Is thus involved in a major nucleotide repair system named guanine glycation repair (GG repair), dedicated to reversing methylglyoxal and glyoxal damage via nucleotide sanitization and direct nucleic acid repair. Plays an important role in protecting cells from carbonyl stress. The sequence is that of Protein/nucleic acid deglycase HchA from Escherichia coli O139:H28 (strain E24377A / ETEC).